Consider the following 493-residue polypeptide: MTTVRTRIAPSPTGDPHVGTAYIALFNYCFAKQHGGEFILRIEDTDQLRSTRESEQQIFDALRWLGIDWSEGPDVGGPHGPYRQSERGDIYQKYAQQLVDMGHAFPCFCTAEELDQMRAEQQAKGETPRYDGRALLLSKEEVQRRLDAGEPHVIRMKVPTEGVCVVPDMLRGEVEIPWDRMDMQVLMKTDGLPTYFLANVVDDHLMGITHVLRGEEWLPSAPKLILLYEYFGWDKPQLCYMPLLRNPDKSKLSKRKNPTSVTFYERMGFMPEAMLNYLGRMGWSMPDEREKFSLQEMVDNFDLSRVSLGGPIFDIEKLSWLNGQWLRDLPVEEFASRLKTWALNPDYMMKIAPHVQGRVETFSQVAPLAGFFFAGGVTPDVKLFEHKKLSPEQVRQVMQLILWKLESLRQWEKERIMGCIQAVVEHLELKLRDAMPLMFAAITGQANSVSVTDAMEILGPDLTRFRLRQALDLLGGVSKKENKEWEKLLGSIA.

The 'HIGH' region motif lies at 10 to 20; that stretch reads PSPTGDPHVGT. Positions 251 to 255 match the 'KMSKS' region motif; it reads KLSKR. ATP is bound at residue Lys-254.

This sequence belongs to the class-I aminoacyl-tRNA synthetase family. Glutamate--tRNA ligase type 1 subfamily. As to quaternary structure, monomer.

It is found in the cytoplasm. It carries out the reaction tRNA(Glu) + L-glutamate + ATP = L-glutamyl-tRNA(Glu) + AMP + diphosphate. Its function is as follows. Catalyzes the attachment of glutamate to tRNA(Glu) in a two-step reaction: glutamate is first activated by ATP to form Glu-AMP and then transferred to the acceptor end of tRNA(Glu). The chain is Glutamate--tRNA ligase from Pseudomonas syringae pv. syringae (strain B728a).